The primary structure comprises 349 residues: Probable inactive tRNA-specific adenosine deaminase-like protein 3 (349 aa).

At Met1 the chain carries N-acetylmethionine. The interval 1–25 is disordered; sequence MEPTSGFAEQPGPVKAESEEQEPAQ. Residues 171-334 enclose the CMP/dCMP-type deaminase domain; sequence AAMQTHMERA…PDLNHRFQVF (164 aa). Zn(2+) contacts are provided by His223, Cys289, and Cys292.

The protein belongs to the cytidine and deoxycytidylate deaminase family. ADAT3 subfamily. The cofactor is Zn(2+).

This chain is Probable inactive tRNA-specific adenosine deaminase-like protein 3 (Adat3), found in Mus musculus (Mouse).